The sequence spans 206 residues: Pyridoxine/pyridoxamine 5'-phosphate oxidase (206 aa).

FMN contacts are provided by residues 53-58 (RMVLLK), 68-69 (YT), lysine 75, and glutamine 97. Lysine 58 is a binding site for substrate. Residues tyrosine 115, arginine 119, and serine 123 each contribute to the substrate site. Residues 132–133 (QS) and tryptophan 177 each bind FMN. 183–185 (RLH) serves as a coordination point for substrate. An FMN-binding site is contributed by arginine 187.

Belongs to the pyridoxamine 5'-phosphate oxidase family. Homodimer. It depends on FMN as a cofactor.

The catalysed reaction is pyridoxamine 5'-phosphate + O2 + H2O = pyridoxal 5'-phosphate + H2O2 + NH4(+). It catalyses the reaction pyridoxine 5'-phosphate + O2 = pyridoxal 5'-phosphate + H2O2. It participates in cofactor metabolism; pyridoxal 5'-phosphate salvage; pyridoxal 5'-phosphate from pyridoxamine 5'-phosphate: step 1/1. It functions in the pathway cofactor metabolism; pyridoxal 5'-phosphate salvage; pyridoxal 5'-phosphate from pyridoxine 5'-phosphate: step 1/1. Its function is as follows. Catalyzes the oxidation of either pyridoxine 5'-phosphate (PNP) or pyridoxamine 5'-phosphate (PMP) into pyridoxal 5'-phosphate (PLP). This Rhizobium etli (strain ATCC 51251 / DSM 11541 / JCM 21823 / NBRC 15573 / CFN 42) protein is Pyridoxine/pyridoxamine 5'-phosphate oxidase.